A 453-amino-acid polypeptide reads, in one-letter code: Plasticin (453 aa).

A head region spans residues 1–51 (MSHSTFSHLFSPHFGAPVYSPVSSRIGGRYVSSSVPTRSVDFRSRSSAPAP). Positions 71–112 (FATRSNEKRELQELNDRFASFIEKVRHLEQQNSKLILELGQY) are coil 1A. The region spanning 77-390 (EKRELQELND…KLLEGEENRI (314 aa)) is the IF rod domain. Residues 113-126 (KDQHQGSTGRINEL) are linker 1. The interval 127 to 222 (CQQEMRELRR…KMHDEEIQDV (96 aa)) is coil 1B. The segment at 223–245 (QVSVQSQQMKMEVMETSSRPDLT) is linker 12. Positions 246–391 (GALRDIRAQY…LLEGEENRIV (146 aa)) are coil 2. The interval 392–453 (VPIMKMPSMS…KKDSHGQGKD (62 aa)) is tail. The disordered stretch occupies residues 421 to 453 (IKTVETRDGEVVKESTKEKGRDEKKDSHGQGKD). Basic and acidic residues predominate over residues 424-453 (VETRDGEVVKESTKEKGRDEKKDSHGQGKD).

Belongs to the intermediate filament family. As to expression, optic nerve.

Functionally, type III neurofilament. In Carassius auratus (Goldfish), this protein is Plasticin.